The primary structure comprises 477 residues: 3-isopropylmalate dehydratase large subunit (477 aa).

[4Fe-4S] cluster is bound by residues Cys352, Cys413, and Cys416.

It belongs to the aconitase/IPM isomerase family. LeuC type 1 subfamily. Heterodimer of LeuC and LeuD. It depends on [4Fe-4S] cluster as a cofactor.

It catalyses the reaction (2R,3S)-3-isopropylmalate = (2S)-2-isopropylmalate. Its pathway is amino-acid biosynthesis; L-leucine biosynthesis; L-leucine from 3-methyl-2-oxobutanoate: step 2/4. Catalyzes the isomerization between 2-isopropylmalate and 3-isopropylmalate, via the formation of 2-isopropylmaleate. The polypeptide is 3-isopropylmalate dehydratase large subunit (Pseudomonas putida (strain ATCC 47054 / DSM 6125 / CFBP 8728 / NCIMB 11950 / KT2440)).